We begin with the raw amino-acid sequence, 934 residues long: Oxysterol-binding protein-related protein 6 (934 aa).

Residues 1–62 (MSSDEKGISP…RQLLEPEPVP (62 aa)) are disordered. At serine 2 the chain carries N-acetylserine. A compositionally biased stretch (low complexity) spans 14–29 (TSTPTHRSASSSTSSQ). The segment covering 30-40 (RDSRQSIHILE) has biased composition (basic and acidic residues). Residue serine 35 is modified to Phosphoserine. Positions 42 to 53 (TASSSTEPSVSR) are enriched in polar residues. Positions 86-181 (PDKHEGFMLK…WVSKLRHHRL (96 aa)) constitute a PH domain. A phosphoserine mark is found at serine 190 and serine 290.

Belongs to the OSBP family. As to quaternary structure, homodimer. Interacts with OSBPL3. Expressed in brain and striated muscle (at protein level). Widely expressed. Expressed in skeletal muscle.

The protein localises to the cytoplasm. It is found in the cytosol. The protein resides in the endoplasmic reticulum membrane. Its subcellular location is the nucleus envelope. It localises to the cell membrane. The protein localises to the endosome membrane. Regulates cellular transport and efflux of cholesterol. Plays a role in phosphatidylinositol-4-phophate (PI4P) turnover at the neuronal membrane. Binds via its PH domain PI4P, phosphatidylinositol-4,5-diphosphate, phosphatidylinositol-3,4,5-triphosphate, and phosphatidic acid. Weakly binds 25-hydroxycholesterol. This is Oxysterol-binding protein-related protein 6 (OSBPL6) from Homo sapiens (Human).